The following is a 250-amino-acid chain: L-ascorbate peroxidase, cytosolic (250 aa).

The Proton acceptor role is filled by His42. The disordered stretch occupies residues 113–137 (VPFHPGREDKPEPPPEGRLPDATKG). Residues 117 to 137 (PGREDKPEPPPEGRLPDATKG) show a composition bias toward basic and acidic residues. His163 is a heme b binding site. Positions 164, 180, 182, 185, and 187 each coordinate K(+).

This sequence belongs to the peroxidase family. Ascorbate peroxidase subfamily. The cofactor is heme b.

The protein resides in the cytoplasm. The catalysed reaction is L-ascorbate + H2O2 = L-dehydroascorbate + 2 H2O. Plays a key role in hydrogen peroxide removal. This Pisum sativum (Garden pea) protein is L-ascorbate peroxidase, cytosolic (APX1).